The primary structure comprises 504 residues: Glucose-6-phosphate isomerase (504 aa).

Residue E333 is the Proton donor of the active site. Active-site residues include H364 and K473.

It belongs to the GPI family.

It localises to the cytoplasm. It catalyses the reaction alpha-D-glucose 6-phosphate = beta-D-fructose 6-phosphate. It participates in carbohydrate biosynthesis; gluconeogenesis. Its pathway is carbohydrate degradation; glycolysis; D-glyceraldehyde 3-phosphate and glycerone phosphate from D-glucose: step 2/4. Catalyzes the reversible isomerization of glucose-6-phosphate to fructose-6-phosphate. This Stenotrophomonas maltophilia (strain K279a) protein is Glucose-6-phosphate isomerase.